The chain runs to 101 residues: UPF0473 protein str1961 (101 aa).

This sequence belongs to the UPF0473 family.

The polypeptide is UPF0473 protein str1961 (Streptococcus thermophilus (strain CNRZ 1066)).